The chain runs to 545 residues: ATP synthase subunit alpha (545 aa).

172–179 serves as a coordination point for ATP; that stretch reads GDRKTGKT. The segment at 511-545 is disordered; that stretch reads FQTTDGTPVINEPEARPLGDDEVTKSQITVSRKTQ. A compositionally biased stretch (basic and acidic residues) spans 523 to 534; that stretch reads PEARPLGDDEVT. Residues 535–545 show a composition bias toward polar residues; sequence KSQITVSRKTQ.

The protein belongs to the ATPase alpha/beta chains family. F-type ATPases have 2 components, CF(1) - the catalytic core - and CF(0) - the membrane proton channel. CF(1) has five subunits: alpha(3), beta(3), gamma(1), delta(1), epsilon(1). CF(0) has three main subunits: a(1), b(2) and c(9-12). The alpha and beta chains form an alternating ring which encloses part of the gamma chain. CF(1) is attached to CF(0) by a central stalk formed by the gamma and epsilon chains, while a peripheral stalk is formed by the delta and b chains.

It localises to the cell membrane. It carries out the reaction ATP + H2O + 4 H(+)(in) = ADP + phosphate + 5 H(+)(out). Its function is as follows. Produces ATP from ADP in the presence of a proton gradient across the membrane. The alpha chain is a regulatory subunit. The protein is ATP synthase subunit alpha of Corynebacterium jeikeium (strain K411).